Here is a 219-residue protein sequence, read N- to C-terminus: MNSSKSSETQCTERGCFSSQMFLWTVAGIPILFLSACFITRCVVTFRIFQTCDEKKFQLPENFTELSCYNYGSGSVKNCCPLNWEYFQSSCYFFSTDTISWALSLKNCSAMGAHLVVINSQEEQEFLSYKKPKMREFFIGLSDQVVEGQWQWVDGTPLTKSLSFWDVGEPNNIATLEDCATMRDSSNPRQNWNDVTCFLNYFRICEMVGINPLNKGKSL.

Residues 1–19 (MNSSKSSETQCTERGCFSS) are Cytoplasmic-facing. Residues 20-40 (QMFLWTVAGIPILFLSACFIT) form a helical; Signal-anchor for type II membrane protein membrane-spanning segment. Residues 41–219 (RCVVTFRIFQ…INPLNKGKSL (179 aa)) lie on the Extracellular side of the membrane. Asparagine 62 carries N-linked (GlcNAc...) asparagine glycosylation. Cysteine 80 and cysteine 91 are oxidised to a cystine. Residues 87–206 (FQSSCYFFST…CFLNYFRICE (120 aa)) enclose the C-type lectin domain. N-linked (GlcNAc...) asparagine glycosylation is present at asparagine 107. 2 disulfides stabilise this stretch: cysteine 108–cysteine 205 and cysteine 179–cysteine 197. Ca(2+) is bound by residues valine 117, asparagine 119, glutamate 123, glutamate 169, asparagine 171, asparagine 193, aspartate 194, and glutamate 206. The Confers specificity for glucose/mannose-type carbohydrates motif lies at 169 to 171 (EPN).

Monomer and homodimer. Interacts with signaling adapter Fc receptor gamma chain/FCER1G to form a functional complex; the interaction is direct. Alternatively, acts as a bridge for interaction between CLEC4D and FCER1G. A heterodimer of CLEC4E and CLEC4D associates with FCER1G to form a functional complex. Interacts with SAP130 nuclear protein that is released from necrotic cells; the interaction is direct. In terms of tissue distribution, expressed in monocytes and macrophages.

The protein localises to the cell membrane. Its subcellular location is the cell projection. It is found in the phagocytic cup. Calcium-dependent lectin that acts as a pattern recognition receptor (PRR) of the innate immune system: recognizes damage-associated molecular patterns (DAMPs) of abnormal self and pathogen-associated molecular patterns (PAMPs) of bacteria and fungi. The PAMPs notably include mycobacterial trehalose 6,6'-dimycolate (TDM), a cell wall glycolipid with potent adjuvant immunomodulatory functions. Interacts with signaling adapter Fc receptor gamma chain/FCER1G to form a functional complex in myeloid cells. Binding of mycobacterial trehalose 6,6'-dimycolate (TDM) to this receptor complex leads to phosphorylation of the immunoreceptor tyrosine-based activation motif (ITAM) of FCER1G, triggering activation of SYK, CARD9 and NF-kappa-B, consequently driving maturation of antigen-presenting cells and shaping antigen-specific priming of T-cells toward effector T-helper 1 and T-helper 17 cell subtypes. Also recognizes alpha-mannose residues on pathogenic fungi of the genus Malassezia and mediates macrophage activation. Through recognition of DAMPs released upon nonhomeostatic cell death, enables immune sensing of damaged self and promotes inflammatory cell infiltration into the damaged tissue. In Homo sapiens (Human), this protein is C-type lectin domain family 4 member E.